Here is a 162-residue protein sequence, read N- to C-terminus: Phosphopantetheine adenylyltransferase (162 aa).

Ser9 lines the substrate pocket. ATP is bound by residues 9–10 and His17; that span reads SF. 3 residues coordinate substrate: Lys41, Leu73, and Lys87. Residues 88 to 90, Glu98, and 123 to 129 contribute to the ATP site; these read GLR and CSFLSSS.

Belongs to the bacterial CoaD family. As to quaternary structure, homohexamer. The cofactor is Mg(2+).

Its subcellular location is the cytoplasm. It catalyses the reaction (R)-4'-phosphopantetheine + ATP + H(+) = 3'-dephospho-CoA + diphosphate. The protein operates within cofactor biosynthesis; coenzyme A biosynthesis; CoA from (R)-pantothenate: step 4/5. Its function is as follows. Reversibly transfers an adenylyl group from ATP to 4'-phosphopantetheine, yielding dephospho-CoA (dPCoA) and pyrophosphate. The chain is Phosphopantetheine adenylyltransferase from Natranaerobius thermophilus (strain ATCC BAA-1301 / DSM 18059 / JW/NM-WN-LF).